Reading from the N-terminus, the 179-residue chain is ATP synthase subunit delta (179 aa).

It belongs to the ATPase delta chain family. F-type ATPases have 2 components, F(1) - the catalytic core - and F(0) - the membrane proton channel. F(1) has five subunits: alpha(3), beta(3), gamma(1), delta(1), epsilon(1). F(0) has three main subunits: a(1), b(2) and c(10-14). The alpha and beta chains form an alternating ring which encloses part of the gamma chain. F(1) is attached to F(0) by a central stalk formed by the gamma and epsilon chains, while a peripheral stalk is formed by the delta and b chains.

Its subcellular location is the cell membrane. Its function is as follows. F(1)F(0) ATP synthase produces ATP from ADP in the presence of a proton or sodium gradient. F-type ATPases consist of two structural domains, F(1) containing the extramembraneous catalytic core and F(0) containing the membrane proton channel, linked together by a central stalk and a peripheral stalk. During catalysis, ATP synthesis in the catalytic domain of F(1) is coupled via a rotary mechanism of the central stalk subunits to proton translocation. In terms of biological role, this protein is part of the stalk that links CF(0) to CF(1). It either transmits conformational changes from CF(0) to CF(1) or is implicated in proton conduction. The chain is ATP synthase subunit delta from Clostridium perfringens (strain ATCC 13124 / DSM 756 / JCM 1290 / NCIMB 6125 / NCTC 8237 / Type A).